The following is a 111-amino-acid chain: Small ribosomal subunit protein bS16 (111 aa).

The interval 92–111 (MEVKAKNRKARPSKKEDKEA) is disordered.

The protein belongs to the bacterial ribosomal protein bS16 family.

This chain is Small ribosomal subunit protein bS16, found in Rickettsia massiliae (strain Mtu5).